A 72-amino-acid polypeptide reads, in one-letter code: MAKEDVIEIQGTIKETLPNAMFKVELENGAEILAHVSGKIRMHYIRILPGDKVTVEMSPYDLTKGRITYRFK.

The S1-like domain maps to 2-72; that stretch reads AKEDVIEIQG…TKGRITYRFK (71 aa).

This sequence belongs to the IF-1 family. In terms of assembly, component of the 30S ribosomal translation pre-initiation complex which assembles on the 30S ribosome in the order IF-2 and IF-3, IF-1 and N-formylmethionyl-tRNA(fMet); mRNA recruitment can occur at any time during PIC assembly.

Its subcellular location is the cytoplasm. Its function is as follows. One of the essential components for the initiation of protein synthesis. Stabilizes the binding of IF-2 and IF-3 on the 30S subunit to which N-formylmethionyl-tRNA(fMet) subsequently binds. Helps modulate mRNA selection, yielding the 30S pre-initiation complex (PIC). Upon addition of the 50S ribosomal subunit IF-1, IF-2 and IF-3 are released leaving the mature 70S translation initiation complex. The protein is Translation initiation factor IF-1 of Lactiplantibacillus plantarum (strain ATCC BAA-793 / NCIMB 8826 / WCFS1) (Lactobacillus plantarum).